Consider the following 158-residue polypeptide: Pyruvoyl-dependent arginine decarboxylase (158 aa).

At S44 the chain carries Pyruvic acid (Ser).

The protein belongs to the PdaD family. The cofactor is pyruvate.

The enzyme catalyses L-arginine + H(+) = agmatine + CO2. The sequence is that of Pyruvoyl-dependent arginine decarboxylase from Pyrococcus horikoshii (strain ATCC 700860 / DSM 12428 / JCM 9974 / NBRC 100139 / OT-3).